The following is a 274-amino-acid chain: MAIHLYKTSTPSTRKRAVDSQGKSNPRNHLIYGQHRCGKGRNARGIITAGHRGGGHKRLYRQIDFRRNENNIYGRIVTIEYDPNRNAYICLIHYGDGEKRYILHPRGARIGDTIVSGTEVPIKMGNALPLTNIPLGTAIHNIEITLGKGGQLARAAGAVAKLISKEGKSAAVKLPSGEVRLISQNCSATVGQVGNVGVNRKSLGRAGSKRWLGKRPVVRGVAMNPVDHPHGGGEGKAPIGRKKPATPWGRPALGIRTRKRKKYNDNLILRRRSK.

Disordered regions lie at residues 1–33 (MAIHLYKTSTPSTRKRAVDSQGKSNPRNHLIYG) and 223–265 (MNPV…KYND).

Belongs to the universal ribosomal protein uL2 family. Part of the 50S ribosomal subunit.

The protein localises to the plastid. It localises to the chloroplast. This Pelargonium hortorum (Common geranium) protein is Large ribosomal subunit protein uL2cz/uL2cy (rpl2-A).